Here is a 504-residue protein sequence, read N- to C-terminus: Maturase K (504 aa).

This sequence belongs to the intron maturase 2 family. MatK subfamily.

Its subcellular location is the plastid. It is found in the chloroplast. Usually encoded in the trnK tRNA gene intron. Probably assists in splicing its own and other chloroplast group II introns. In Gossypium turneri (Cotton), this protein is Maturase K.